Here is a 437-residue protein sequence, read N- to C-terminus: Homogentisate 1,2-dioxygenase (437 aa).

Histidine 295 (proton acceptor) is an active-site residue. Residues histidine 338 and glutamate 344 each contribute to the Fe cation site. Homogentisate is bound by residues tyrosine 353 and histidine 374. Residue histidine 374 participates in Fe cation binding.

The protein belongs to the homogentisate dioxygenase family. Hexamer; dimer of trimers. Fe cation is required as a cofactor.

It carries out the reaction homogentisate + O2 = 4-maleylacetoacetate + H(+). Its pathway is amino-acid degradation; L-phenylalanine degradation; acetoacetate and fumarate from L-phenylalanine: step 4/6. Its function is as follows. Involved in the catabolism of homogentisate (2,5-dihydroxyphenylacetate or 2,5-OH-PhAc), a central intermediate in the degradation of phenylalanine and tyrosine. Catalyzes the oxidative ring cleavage of the aromatic ring of homogentisate to yield maleylacetoacetate. In Myxococcus xanthus (strain DK1622), this protein is Homogentisate 1,2-dioxygenase.